The chain runs to 1322 residues: Centrosome-associated protein Alms1a (1322 aa).

9 disordered regions span residues 1-26, 53-135, 165-193, 252-442, 464-614, 657-752, 814-844, 856-911, and 1083-1109; these read MRAKRGAVGKVMMSGSRHNKLAESSR, TASS…SEVT, SQSAEDIRTPTKSPQMQNKKTQTPESVLK, EEPS…NSVY, KHNQ…GSRP, ESST…ASTD, SKSQKKANTESATAAQIPSSMRCMGDQKERP, AEAE…LNQR, and ASATGGAGGSAITRSTTTTTNSSSSMM. Residues 53–62 are compositionally biased toward low complexity; it reads TASSGASGST. Positions 78–111 are enriched in basic and acidic residues; that stretch reads MEHESRPESGHRRRTKSSDHRSPDERGEAKEQLR. A compositionally biased stretch (polar residues) spans 165–189; the sequence is SQSAEDIRTPTKSPQMQNKKTQTPE. Residues 279-292 show a composition bias toward low complexity; the sequence is SLNSGMESSLSSNK. Residues 309-318 show a composition bias toward polar residues; sequence EVSSCQTDCR. Over residues 319-330 the composition is skewed to low complexity; that stretch reads SSSQKESTQGSS. Over residues 338 to 350 the composition is skewed to polar residues; it reads NFTTEGTQCSYNR. A compositionally biased stretch (acidic residues) spans 354-364; sequence EIDSIMEEEES. 2 stretches are compositionally biased toward basic and acidic residues: residues 365 to 375 and 394 to 408; these read IDRRKKDDLRI and SRRESLSSYRRDDSR. The segment covering 409 to 430 has biased composition (low complexity); the sequence is LNSPNSSRLGSEVSSRVESSRS. 3 stretches are compositionally biased toward basic and acidic residues: residues 464–487, 495–512, and 519–538; these read KHNQRRQQEMEVEPKKQLEKEQHQ, PKGRELKDKNHHSGREQQ, and RDQRKAEQRHEKDHQLEREQ. Low complexity-rich tracts occupy residues 594–605 and 657–669; these read STGVTASTSTTS and ESSTSSRSLSSSS. Polar residues predominate over residues 678–696; it reads GSLQQVAATNTNQSNARSS. The segment covering 714–735 has biased composition (low complexity); the sequence is AIGSSSPLPESVSYSGSTSGSG. 2 stretches are compositionally biased toward polar residues: residues 737–751 and 822–832; these read VITQKTNIPNRNAST and TESATAAQIPS. The segment covering 893 to 907 has biased composition (pro residues); sequence LPAPPPTQPPPPPPH. Over residues 1092–1107 the composition is skewed to low complexity; the sequence is SAITRSTTTTTNSSSS. The segment at 1115–1322 is interaction with Klp10A; that stretch reads MSVPMGMMNT…ISLNHSMAIM (208 aa). Residues 1190–1309 are ALMS motif; sequence SLQDQLQLAR…FNKRLKSRVA (120 aa).

The protein belongs to the ALMS1 family. Interacts (via C-terminus) with Klp10A. Interacts with SAK. As to expression, expressed in all germlines, including germline stem cells and spermatogonia.

The protein resides in the cytoplasm. It is found in the cytoskeleton. Its subcellular location is the microtubule organizing center. It localises to the centrosome. The protein localises to the centriole. Functionally, in asymmetrically dividing germline stem cells (GSCs), plays a critical role in ensuring centrosome duplication, which is essential for the production of centrosomes and centrioles in all downstream germ cells. Might recruit SAK for daughter centriole duplication. The protein is Centrosome-associated protein Alms1a of Drosophila melanogaster (Fruit fly).